A 130-amino-acid chain; its full sequence is Splicing regulatory small protein (130 aa).

The segment covering 1–10 (MRTKPQRPRA) has biased composition (basic residues). Disordered regions lie at residues 1-29 (MRTK…EETG) and 74-130 (GRAL…STRR). Residues 16-22 (GQPCGSP) form a mediates interaction with SRSF3 region. Basic and acidic residues predominate over residues 77 to 98 (LEPKADPHTCPYGRKESRGEKV). Residues 120–130 (SLKSGSPSTRR) are compositionally biased toward polar residues.

In terms of assembly, interacts with SRSF3; increases SRSF3 binding to specific exons.

The protein resides in the nucleus. Interacts with the splicing factor SRSF3 and increases its binding to specific exons within pre-mRNA, thereby regulating exon-inclusion during alternative splicing. Does not directly bind pre-mRNA and could regulate a wider range of splicing factors through a similar mechanism. This is Splicing regulatory small protein from Homo sapiens (Human).